The primary structure comprises 387 residues: Cytochrome b (387 aa).

4 helical membrane-spanning segments follow: residues 32-52 (FGSL…LLAC), 76-98 (FLLR…LHIG), 113-133 (TWNI…LGYC), and 179-199 (FFSL…MHLI). The heme b site is built by H82 and H96. Positions 183 and 197 each coordinate heme b. H202 serves as a coordination point for a ubiquinone. The next 4 membrane-spanning stretches (helical) occupy residues 225–245 (YLIK…YMAF), 289–309 (QLGV…PLLD), 321–341 (FGKF…WIGG), and 348–368 (FITI…ILIP).

The protein belongs to the cytochrome b family. Fungal cytochrome b-c1 complex contains 10 subunits; 3 respiratory subunits, 2 core proteins and 5 low-molecular weight proteins. Cytochrome b-c1 complex is a homodimer. It depends on heme b as a cofactor.

Its subcellular location is the mitochondrion inner membrane. In terms of biological role, component of the ubiquinol-cytochrome c reductase complex (complex III or cytochrome b-c1 complex) that is part of the mitochondrial respiratory chain. The b-c1 complex mediates electron transfer from ubiquinol to cytochrome c. Contributes to the generation of a proton gradient across the mitochondrial membrane that is then used for ATP synthesis. The polypeptide is Cytochrome b (cob) (Schizosaccharomyces pombe (strain 972 / ATCC 24843) (Fission yeast)).